The chain runs to 49 residues: Large ribosomal subunit protein bL33A (49 aa).

Belongs to the bacterial ribosomal protein bL33 family.

The polypeptide is Large ribosomal subunit protein bL33A (rpmG1) (Enterococcus faecalis (strain ATCC 700802 / V583)).